The sequence spans 391 residues: Anhydro-N-acetylmuramic acid kinase (391 aa).

ATP is bound at residue 9–16 (GTSYDAVE).

It belongs to the anhydro-N-acetylmuramic acid kinase family.

The enzyme catalyses 1,6-anhydro-N-acetyl-beta-muramate + ATP + H2O = N-acetyl-D-muramate 6-phosphate + ADP + H(+). It functions in the pathway amino-sugar metabolism; 1,6-anhydro-N-acetylmuramate degradation. Its pathway is cell wall biogenesis; peptidoglycan recycling. Its function is as follows. Catalyzes the specific phosphorylation of 1,6-anhydro-N-acetylmuramic acid (anhMurNAc) with the simultaneous cleavage of the 1,6-anhydro ring, generating MurNAc-6-P. Is required for the utilization of anhMurNAc either imported from the medium or derived from its own cell wall murein, and thus plays a role in cell wall recycling. This is Anhydro-N-acetylmuramic acid kinase from Streptomyces coelicolor (strain ATCC BAA-471 / A3(2) / M145).